Reading from the N-terminus, the 312-residue chain is R2-like ligand binding oxidase (312 aa).

Residues glutamate 68, glutamate 101, and histidine 104 each contribute to the Mn(2+) site. A cross-link (3-(O4'-tyrosyl)-valine (Val-Tyr)) is located at residues 71 to 162 (VTQDIQPFMA…AAQVRASVTY (92 aa)). Position 101 (glutamate 101) interacts with Fe cation. Fe cation is bound by residues glutamate 167, glutamate 202, and histidine 205.

It belongs to the ribonucleoside diphosphate reductase small chain family. R2-like ligand binding oxidase subfamily. Homodimer. Requires Fe cation as cofactor. Mn(2+) is required as a cofactor.

In terms of biological role, probable oxidase that might be involved in lipid metabolism. The polypeptide is R2-like ligand binding oxidase (Mycolicibacterium vanbaalenii (strain DSM 7251 / JCM 13017 / BCRC 16820 / KCTC 9966 / NRRL B-24157 / PYR-1) (Mycobacterium vanbaalenii)).